The chain runs to 139 residues: Metallothiol transferase FosB (139 aa).

A VOC domain is found at 4 to 119; it reads GINHITYSVS…DGHKLELHTG (116 aa). Residues His7, His66, and Glu115 each coordinate Mg(2+). Glu115 serves as the catalytic Proton donor/acceptor.

It belongs to the fosfomycin resistance protein family. FosB subfamily. In terms of assembly, homodimer. It depends on Mg(2+) as a cofactor.

Its subcellular location is the cytoplasm. Its function is as follows. Metallothiol transferase which confers resistance to fosfomycin by catalyzing the addition of a thiol cofactor to fosfomycin. L-cysteine is probably the physiological thiol donor. The chain is Metallothiol transferase FosB from Staphylococcus haemolyticus.